Reading from the N-terminus, the 153-residue chain is MEVILKQDVEKLGHQGDVVKVAEGYGRNYLLPKKLAIEATAANKAVIEQMKAAAVRRIAREKTDAESLAKQFDGVTVTFTRRAGESNQLFGSVTTSDIATELEHKGFKLDRRKLSLVEPIKTTGDFKVALKLHRDVTVDIPVHVAKEAEVAAQ.

Belongs to the bacterial ribosomal protein bL9 family.

Binds to the 23S rRNA. This is Large ribosomal subunit protein bL9 from Koribacter versatilis (strain Ellin345).